The following is a 103-amino-acid chain: Small ubiquitin-related modifier 2 (103 aa).

The region spanning 15-92 (AHINLKVKGQ…IDAMLHQTGG (78 aa)) is the Ubiquitin-like domain. Residue glycine 92 forms a Glycyl lysine isopeptide (Gly-Lys) (interchain with K-? in acceptor proteins) linkage.

This sequence belongs to the ubiquitin family. SUMO subfamily. In terms of assembly, interacts with SAE2, SCE1, SIZ1 and MMS21. Interacts with HSFA2. Covalently attached to ABI5, FLD, GTE3, HSFA2 and ICE1.

Its subcellular location is the nucleus. It localises to the cytoplasm. Its function is as follows. Ubiquitin-like protein which can be covalently attached to target lysines as a monomer. Does not seem to be involved in protein degradation and may function as an antagonist of ubiquitin in the degradation process. Required for the massive protein sumoylation in the nucleus induced by heat shock and controlled by SIZ1. This is Small ubiquitin-related modifier 2 from Arabidopsis thaliana (Mouse-ear cress).